The primary structure comprises 102 residues: UPF0045 protein Mb1933 (102 aa).

Belongs to the UPF0045 family.

This chain is UPF0045 protein Mb1933, found in Mycobacterium bovis (strain ATCC BAA-935 / AF2122/97).